The following is a 160-amino-acid chain: Transcription elongation factor GreA (160 aa).

The stretch at 1 to 71 forms a coiled coil; it reads MAEKTYPMTL…GQISTLETKI (71 aa).

This sequence belongs to the GreA/GreB family.

Necessary for efficient RNA polymerase transcription elongation past template-encoded arresting sites. The arresting sites in DNA have the property of trapping a certain fraction of elongating RNA polymerases that pass through, resulting in locked ternary complexes. Cleavage of the nascent transcript by cleavage factors such as GreA or GreB allows the resumption of elongation from the new 3'terminus. GreA releases sequences of 2 to 3 nucleotides. This Streptococcus pyogenes serotype M3 (strain ATCC BAA-595 / MGAS315) protein is Transcription elongation factor GreA.